The sequence spans 314 residues: Chitinase 1 (314 aa).

The signal sequence occupies residues M1–A26. The 270-residue stretch at L27–Q296 folds into the GH18 domain. The active-site Proton donor is the E151.

It belongs to the glycosyl hydrolase 18 family. Chitinase class II subfamily.

The catalysed reaction is Random endo-hydrolysis of N-acetyl-beta-D-glucosaminide (1-&gt;4)-beta-linkages in chitin and chitodextrins.. In terms of biological role, able to cleave glycolchitin. The polypeptide is Chitinase 1 (Tulipa saxatilis subsp. bakeri (Tulip)).